Reading from the N-terminus, the 308-residue chain is MLSTVITKPPITAKPKNQWLAHLMLEFSDTPVGTQLTRTKRKGPLSVQKAFYPEGPDCAHIYLLHPPAGIVSGDELRIGIDVKKNAHLLFTTPGAGRFYRAREDLTIGDSQQTQITQFDLEAQAKCENFPQETIVYEGADGFNSVDINLTSTSVYLGWDITCLGLPNSDQTFIKGKYCQLNRLFCDAKLIYHDRISLSPSNNLLAHPAGLAGNTVFATFLAYAPILHNNPEHSNKPQQHKALVMQIRAKITAESAQEKVSITEINGLLVIRYLGHHAQECKQLFISLWQLLRPLLLNKTAVQPRIWHT.

Belongs to the UreD family. In terms of assembly, ureD, UreF and UreG form a complex that acts as a GTP-hydrolysis-dependent molecular chaperone, activating the urease apoprotein by helping to assemble the nickel containing metallocenter of UreC. The UreE protein probably delivers the nickel.

Its subcellular location is the cytoplasm. Required for maturation of urease via the functional incorporation of the urease nickel metallocenter. The sequence is that of Urease accessory protein UreD from Psychromonas ingrahamii (strain DSM 17664 / CCUG 51855 / 37).